The primary structure comprises 364 residues: Fructose-bisphosphate aldolase C-A (364 aa).

Substrate-binding residues include Arg-56 and Lys-147. Glu-188 (proton acceptor) is an active-site residue. Residue Lys-230 is the Schiff-base intermediate with dihydroxyacetone-P of the active site.

Belongs to the class I fructose-bisphosphate aldolase family. As to quaternary structure, homotetramer. Expressed specifically in Purkinje cells in the brain.

The enzyme catalyses beta-D-fructose 1,6-bisphosphate = D-glyceraldehyde 3-phosphate + dihydroxyacetone phosphate. It participates in carbohydrate degradation; glycolysis; D-glyceraldehyde 3-phosphate and glycerone phosphate from D-glucose: step 4/4. The chain is Fructose-bisphosphate aldolase C-A from Danio rerio (Zebrafish).